A 237-amino-acid polypeptide reads, in one-letter code: tRNA1(Val) (adenine(37)-N6)-methyltransferase (237 aa).

The protein belongs to the methyltransferase superfamily. tRNA (adenine-N(6)-)-methyltransferase family.

The protein localises to the cytoplasm. The catalysed reaction is adenosine(37) in tRNA1(Val) + S-adenosyl-L-methionine = N(6)-methyladenosine(37) in tRNA1(Val) + S-adenosyl-L-homocysteine + H(+). Functionally, specifically methylates the adenine in position 37 of tRNA(1)(Val) (anticodon cmo5UAC). The sequence is that of tRNA1(Val) (adenine(37)-N6)-methyltransferase from Tolumonas auensis (strain DSM 9187 / NBRC 110442 / TA 4).